A 132-amino-acid polypeptide reads, in one-letter code: Photosystem II extrinsic protein U (132 aa).

Residues 1-29 form the signal peptide; that stretch reads MKRLLSWLTGALVMAGLLSSLVLPSAVYA.

The protein belongs to the PsbU family. As to quaternary structure, PSII is composed of 1 copy each of membrane proteins PsbA, PsbB, PsbC, PsbD, PsbE, PsbF, PsbH, PsbI, PsbJ, PsbK, PsbL, PsbM, PsbT, PsbX, PsbY, PsbZ, Psb30/Ycf12, peripheral proteins PsbO, CyanoQ (PsbQ), PsbU, PsbV and a large number of cofactors. It forms dimeric complexes.

The protein resides in the cellular thylakoid membrane. Functionally, one of the extrinsic, lumenal subunits of photosystem II (PSII). PSII is a light-driven water plastoquinone oxidoreductase, using light energy to abstract electrons from H(2)O, generating a proton gradient subsequently used for ATP formation. The extrinsic proteins stabilize the structure of photosystem II oxygen-evolving complex (OEC), the ion environment of oxygen evolution and protect the OEC against heat-induced inactivation. This is Photosystem II extrinsic protein U from Synechococcus sp. (strain CC9902).